A 242-amino-acid polypeptide reads, in one-letter code: Caffeoyl-CoA O-methyltransferase 3 (242 aa).

Lys16 is a substrate binding site. S-adenosyl-L-methionine is bound by residues Thr58, Glu80, 82–83, Ser88, Asp106, and Ala135; that span reads GV. Asp158 contacts substrate. Asp158 contacts a divalent metal cation. S-adenosyl-L-methionine is bound at residue Asp160. Residues Asp184 and Asn185 each contribute to the a divalent metal cation site. Asn189 provides a ligand contact to substrate.

It belongs to the class I-like SAM-binding methyltransferase superfamily. Cation-dependent O-methyltransferase family. CCoAMT subfamily. It depends on Mg(2+) as a cofactor. Mostly expressed in the bottom and middle parts of the stems.

The catalysed reaction is (E)-caffeoyl-CoA + S-adenosyl-L-methionine = (E)-feruloyl-CoA + S-adenosyl-L-homocysteine + H(+). Its pathway is aromatic compound metabolism; phenylpropanoid biosynthesis. Its function is as follows. Methylates caffeoyl-CoA to feruloyl-CoA and 5-hydroxyferuloyl-CoA to sinapoyl-CoA. Plays a role in the synthesis of feruloylated polysaccharides. Involved in the reinforcement of the plant cell wall. Also involved in the responding to wounding or pathogen challenge by the increased formation of cell wall-bound ferulic acid polymers. Also methylates free caffeic and 5-hydroxyferulic acids. This chain is Caffeoyl-CoA O-methyltransferase 3 (CCOAOMT3), found in Nicotiana tabacum (Common tobacco).